Here is a 244-residue protein sequence, read N- to C-terminus: Methylthioribulose-1-phosphate dehydratase (244 aa).

C89 contributes to the substrate binding site. Zn(2+) is bound by residues H107 and H109. E130 serves as the catalytic Proton donor/acceptor. H192 contacts Zn(2+).

The protein belongs to the aldolase class II family. MtnB subfamily. The cofactor is Zn(2+).

The protein resides in the cytoplasm. It carries out the reaction 5-(methylsulfanyl)-D-ribulose 1-phosphate = 5-methylsulfanyl-2,3-dioxopentyl phosphate + H2O. It functions in the pathway amino-acid biosynthesis; L-methionine biosynthesis via salvage pathway; L-methionine from S-methyl-5-thio-alpha-D-ribose 1-phosphate: step 2/6. Functionally, catalyzes the dehydration of methylthioribulose-1-phosphate (MTRu-1-P) into 2,3-diketo-5-methylthiopentyl-1-phosphate (DK-MTP-1-P). The protein is Methylthioribulose-1-phosphate dehydratase of Saccharomyces cerevisiae (strain YJM789) (Baker's yeast).